A 452-amino-acid polypeptide reads, in one-letter code: Cell division protein FtsZ (452 aa).

GTP is bound by residues 24–28 (GAGSN), 111–113 (GTG), Glu-142, Arg-146, and Asp-190.

This sequence belongs to the FtsZ family. In terms of assembly, homodimer. Polymerizes to form a dynamic ring structure in a strictly GTP-dependent manner. Interacts directly with several other division proteins.

It is found in the cytoplasm. In terms of biological role, essential cell division protein that forms a contractile ring structure (Z ring) at the future cell division site. The regulation of the ring assembly controls the timing and the location of cell division. One of the functions of the FtsZ ring is to recruit other cell division proteins to the septum to produce a new cell wall between the dividing cells. Binds GTP and shows GTPase activity. This chain is Cell division protein FtsZ, found in Rickettsia felis (strain ATCC VR-1525 / URRWXCal2) (Rickettsia azadi).